Reading from the N-terminus, the 189-residue chain is Protein jagunal homolog (189 aa).

Topologically, residues 1-34 are cytoplasmic; that stretch reads MSSRGVRAAGTDGTDFQNRQRVAQHYQESAQYKS. Residues 35–55 traverse the membrane as a helical segment; sequence ILKWFFVPHFLILVFMWLKVG. Topologically, residues 56-78 are lumenal; sequence SELLRTNFGWKNAFFDRLDMPSA. A helical transmembrane segment spans residues 79–99; it reads YPWEYVWCFSFIPIVLAIYSF. Over 100–105 the chain is Cytoplasmic; it reads QRNKLK. A helical membrane pass occupies residues 106-126; sequence ILHYAYYAEFVVGIFPCMIGL. The Lumenal portion of the chain corresponds to 127-150; the sequence is GGQLPELMEYAQDMEGSNTPTFKG. Residues 151-171 form a helical membrane-spanning segment; that stretch reads IFPMVIIWYIFFAVALQIHGF. Over 172-189 the chain is Cytoplasmic; the sequence is SMYFMHHLAAAWAPVKRD.

Belongs to the jagunal family.

The protein localises to the endoplasmic reticulum membrane. This chain is Protein jagunal homolog, found in Caenorhabditis elegans.